A 100-amino-acid chain; its full sequence is Large ribosomal subunit protein eL36A (100 aa).

At T2 the chain carries N-acetylthreonine.

Belongs to the eukaryotic ribosomal protein eL36 family. Component of the large ribosomal subunit (LSU). Mature yeast ribosomes consist of a small (40S) and a large (60S) subunit. The 40S small subunit contains 1 molecule of ribosomal RNA (18S rRNA) and 33 different proteins (encoded by 57 genes). The large 60S subunit contains 3 rRNA molecules (25S, 5.8S and 5S rRNA) and 46 different proteins (encoded by 81 genes). In terms of processing, N-terminally acetylated by acetyltransferase NatA.

The protein resides in the cytoplasm. In terms of biological role, component of the ribosome, a large ribonucleoprotein complex responsible for the synthesis of proteins in the cell. The small ribosomal subunit (SSU) binds messenger RNAs (mRNAs) and translates the encoded message by selecting cognate aminoacyl-transfer RNA (tRNA) molecules. The large subunit (LSU) contains the ribosomal catalytic site termed the peptidyl transferase center (PTC), which catalyzes the formation of peptide bonds, thereby polymerizing the amino acids delivered by tRNAs into a polypeptide chain. The nascent polypeptides leave the ribosome through a tunnel in the LSU and interact with protein factors that function in enzymatic processing, targeting, and the membrane insertion of nascent chains at the exit of the ribosomal tunnel. In Saccharomyces cerevisiae (strain ATCC 204508 / S288c) (Baker's yeast), this protein is Large ribosomal subunit protein eL36A.